The primary structure comprises 415 residues: Probable glucan 1,3-beta-glucosidase A (415 aa).

Positions 1 to 22 (MLSRLSQTALVALSLMTVLTEA) are cleaved as a signal peptide. Catalysis depends on Glu-210, which acts as the Proton donor. 2 disulfides stabilise this stretch: Cys-290/Cys-414 and Cys-315/Cys-341. The active-site Nucleophile is the Glu-307. Residues 335–359 (SPRYGDCGNKRQGSSSGLSEQERSD) are disordered.

Belongs to the glycosyl hydrolase 5 (cellulase A) family. In terms of assembly, monomer. Requires Mn(2+) as cofactor.

The protein resides in the secreted. It catalyses the reaction Successive hydrolysis of beta-D-glucose units from the non-reducing ends of (1-&gt;3)-beta-D-glucans, releasing alpha-glucose.. Its function is as follows. Beta-glucanases participate in the metabolism of beta-glucan, the main structural component of the cell wall. It could also function biosynthetically as a transglycosylase. The chain is Probable glucan 1,3-beta-glucosidase A (exgA) from Aspergillus clavatus (strain ATCC 1007 / CBS 513.65 / DSM 816 / NCTC 3887 / NRRL 1 / QM 1276 / 107).